Reading from the N-terminus, the 60-residue chain is UPF0434 protein YPA_0693 (60 aa).

This sequence belongs to the UPF0434 family.

This is UPF0434 protein YPA_0693 from Yersinia pestis bv. Antiqua (strain Antiqua).